Here is a 566-residue protein sequence, read N- to C-terminus: Chromatin assembly factor 1 subunit B (566 aa).

WD repeat units lie at residues 11-54 (HNKE…DGKA), 64-103 (RHTKAVNVVRFSPSGEVLASGGDDAVILLWKLNDSKELEP), 127-166 (GHLEDVYDICWTSDGNYMASASVDNTAIMWDVVKGQKVSI), 169-208 (EHKSYVQGITWDPLGQYIATLSCDRVLRVYNTQTKRVAFN), 228-279 (FHDD…RPMG), and 351-392 (IHYH…IPLK). 2 disordered regions span residues 411–481 (KSQP…NQPR) and 501–566 (IPLK…KPNK). Composition is skewed to polar residues over residues 425–437 (TEGTSLSTPTLQP) and 469–478 (QPASQSTKVN).

It belongs to the WD repeat HIR1 family. As to quaternary structure, interacts with CHAF1A.

The protein resides in the nucleus. Functionally, acts as a component of the histone chaperone complex chromatin assembly factor 1 (CAF-1), which assembles histone octamers onto DNA during replication and repair. CAF-1 performs the first step of the nucleosome assembly process, bringing newly synthesized histones H3 and H4 to replicating DNA; histones H2A/H2B can bind to this chromatin precursor subsequent to DNA replication to complete the histone octamer. The protein is Chromatin assembly factor 1 subunit B (CHAF1B) of Gallus gallus (Chicken).